The primary structure comprises 371 residues: Forkhead box protein J1.2 (371 aa).

2 disordered regions span residues A45–T74 and V80–E99. A DNA-binding region (fork-head) is located at residues K109 to M203. The interval P228–K248 is disordered.

Belongs to the FOXJ1 family. In terms of tissue distribution, expressed diffusely through much of gastrula and neurula stage embryos. At stage 23 (late neurula), limited to the otic vesicle. By stage 28 (tailbud), also expressed transiently in the presumptive nephrostomes of the pronephros. At stage 35 (early tadpole), expressed broadly in the head and strongly expressed in the developing gill structures.

It localises to the nucleus. In terms of biological role, key transcription factor required for motile ciliogenesis. Activates genes essential for motile cilia formation and function. This is Forkhead box protein J1.2 from Xenopus tropicalis (Western clawed frog).